Reading from the N-terminus, the 185-residue chain is Large ribosomal subunit protein bL12c (185 aa).

A chloroplast-targeting transit peptide spans 1-47 (MASTALSSAFSLLSLPSSSSPAAAAAAAPRSFAVPSRARPRRAVAVV).

The protein belongs to the bacterial ribosomal protein bL12 family.

It is found in the plastid. The protein localises to the chloroplast. The polypeptide is Large ribosomal subunit protein bL12c (RPL12-2) (Oryza sativa subsp. japonica (Rice)).